The sequence spans 404 residues: Serine/threonine transporter SstT (404 aa).

Transmembrane regions (helical) follow at residues 11-31, 44-64, 82-102, 144-164, 179-199, 218-238, 290-310, 316-336, and 363-383; these read IINA…IILA, LGGL…FVLV, IISL…TMSF, TANY…LHHA, VSFI…GLVA, GVLL…MVFI, IPLG…VLTL, MGIQ…AISA, and VAMQ…SAET.

The protein belongs to the dicarboxylate/amino acid:cation symporter (DAACS) (TC 2.A.23) family.

Its subcellular location is the cell inner membrane. The catalysed reaction is L-serine(in) + Na(+)(in) = L-serine(out) + Na(+)(out). It catalyses the reaction L-threonine(in) + Na(+)(in) = L-threonine(out) + Na(+)(out). Its function is as follows. Involved in the import of serine and threonine into the cell, with the concomitant import of sodium (symport system). In Desulfotalea psychrophila (strain LSv54 / DSM 12343), this protein is Serine/threonine transporter SstT.